Consider the following 96-residue polypeptide: UPF0235 protein PC1_3453 (96 aa).

Belongs to the UPF0235 family.

This Pectobacterium carotovorum subsp. carotovorum (strain PC1) protein is UPF0235 protein PC1_3453.